Reading from the N-terminus, the 773-residue chain is Protein FAM149A (773 aa).

Low complexity-rich tracts occupy residues 18–37 (TSTA…AAAA) and 54–90 (LLRA…AAGA). Disordered stretches follow at residues 18–155 (TSTA…RELG), 173–210 (DIGE…DSLP), 232–264 (FSSS…TERG), and 568–613 (TQNE…PWRL). Residues 174-186 (IGEEGASDGDSGD) show a composition bias toward acidic residues. Residues 245–264 (TSWSGSATQSSTTGSSTERG) are compositionally biased toward low complexity.

It belongs to the FAM149 family.

This Homo sapiens (Human) protein is Protein FAM149A (FAM149A).